A 226-amino-acid chain; its full sequence is ATP synthase F(0) complex subunit a (226 aa).

The next 6 membrane-spanning stretches (helical) occupy residues 6-26 (FASF…IILF), 68-88 (WSLM…LGLL), 97-117 (QLSM…VMGF), 138-158 (IPML…ALAV), 164-184 (ITAG…LSTI), and 189-209 (TLII…VALI).

Belongs to the ATPase A chain family. In terms of assembly, component of the ATP synthase complex composed at least of ATP5F1A/subunit alpha, ATP5F1B/subunit beta, ATP5MC1/subunit c (homooctomer), MT-ATP6/subunit a, MT-ATP8/subunit 8, ATP5ME/subunit e, ATP5MF/subunit f, ATP5MG/subunit g, ATP5MK/subunit k, ATP5MJ/subunit j, ATP5F1C/subunit gamma, ATP5F1D/subunit delta, ATP5F1E/subunit epsilon, ATP5PF/subunit F6, ATP5PB/subunit b, ATP5PD/subunit d, ATP5PO/subunit OSCP. ATP synthase complex consists of a soluble F(1) head domain (subunits alpha(3) and beta(3)) - the catalytic core - and a membrane F(0) domain - the membrane proton channel (subunits c, a, 8, e, f, g, k and j). These two domains are linked by a central stalk (subunits gamma, delta, and epsilon) rotating inside the F1 region and a stationary peripheral stalk (subunits F6, b, d, and OSCP). Interacts with DNAJC30; interaction is direct.

Its subcellular location is the mitochondrion inner membrane. The enzyme catalyses H(+)(in) = H(+)(out). Functionally, subunit a, of the mitochondrial membrane ATP synthase complex (F(1)F(0) ATP synthase or Complex V) that produces ATP from ADP in the presence of a proton gradient across the membrane which is generated by electron transport complexes of the respiratory chain. ATP synthase complex consist of a soluble F(1) head domain - the catalytic core - and a membrane F(1) domain - the membrane proton channel. These two domains are linked by a central stalk rotating inside the F(1) region and a stationary peripheral stalk. During catalysis, ATP synthesis in the catalytic domain of F(1) is coupled via a rotary mechanism of the central stalk subunits to proton translocation. With the subunit c (ATP5MC1), forms the proton-conducting channel in the F(0) domain, that contains two crucial half-channels (inlet and outlet) that facilitate proton movement from the mitochondrial intermembrane space (IMS) into the matrix. Protons are taken up via the inlet half-channel and released through the outlet half-channel, following a Grotthuss mechanism. The chain is ATP synthase F(0) complex subunit a from Pan paniscus (Pygmy chimpanzee).